Consider the following 415-residue polypeptide: FXa-directed anticoagulant (415 aa).

The signal sequence occupies residues 1–17 (MYLKIVILVTFPLVCFT). Asparagine 117, asparagine 166, asparagine 216, and asparagine 320 each carry an N-linked (GlcNAc...) asparagine glycan.

It belongs to the serpin family. (Microbial infection) Interacts with Zika virus envelope protein E and Zika virus-like particles; the interaction does not affect Zika virus replication in human endothelial cells and keratinocytes. Post-translationally, the N-terminus is blocked. As to expression, female salivary gland (at protein level). Not detected in female carcass without head and salivary glands. Not detected in male tissues.

Its subcellular location is the secreted. Its function is as follows. Anticoagulant serpin-type protein inhibiting host coagulation factor Xa (F10). Does not inhibit host thrombin (F2) and trypsin. (Microbial infection) Does not affect Zika virus replication in human endothelial cells and keratinocytes. This is FXa-directed anticoagulant from Aedes aegypti (Yellowfever mosquito).